A 362-amino-acid chain; its full sequence is Ferredoxin--NADP reductase 1 (362 aa).

The FAD site is built by Asp-47, Gln-55, Tyr-60, Ala-100, Phe-141, Asp-309, and Ser-350.

It belongs to the ferredoxin--NADP reductase type 2 family. Homodimer. FAD is required as a cofactor.

The catalysed reaction is 2 reduced [2Fe-2S]-[ferredoxin] + NADP(+) + H(+) = 2 oxidized [2Fe-2S]-[ferredoxin] + NADPH. In Cupriavidus pinatubonensis (strain JMP 134 / LMG 1197) (Cupriavidus necator (strain JMP 134)), this protein is Ferredoxin--NADP reductase 1.